A 560-amino-acid chain; its full sequence is Arginine--tRNA ligase (560 aa).

Residues proline 121–histidine 131 carry the 'HIGH' region motif.

The protein belongs to the class-I aminoacyl-tRNA synthetase family. Monomer.

Its subcellular location is the cytoplasm. It catalyses the reaction tRNA(Arg) + L-arginine + ATP = L-arginyl-tRNA(Arg) + AMP + diphosphate. In Exiguobacterium sibiricum (strain DSM 17290 / CCUG 55495 / CIP 109462 / JCM 13490 / 255-15), this protein is Arginine--tRNA ligase.